Here is a 329-residue protein sequence, read N- to C-terminus: Tagatose 1,6-diphosphate aldolase 2 (329 aa).

It belongs to the aldolase LacD family.

It catalyses the reaction D-tagatofuranose 1,6-bisphosphate = D-glyceraldehyde 3-phosphate + dihydroxyacetone phosphate. The protein operates within carbohydrate metabolism; D-tagatose 6-phosphate degradation; D-glyceraldehyde 3-phosphate and glycerone phosphate from D-tagatose 6-phosphate: step 2/2. This chain is Tagatose 1,6-diphosphate aldolase 2 (lacD2), found in Streptococcus mutans serotype c (strain ATCC 700610 / UA159).